Consider the following 743-residue polypeptide: Phosphoribosylformylglycinamidine synthase subunit PurL (743 aa).

His54 is a catalytic residue. ATP contacts are provided by Tyr57 and Lys96. Glu98 provides a ligand contact to Mg(2+). Substrate-binding positions include 99–102 (SHNH) and Arg121. The active-site Proton acceptor is the His100. Asp122 serves as a coordination point for Mg(2+). A substrate-binding site is contributed by Gln245. Mg(2+) is bound at residue Asp273. A substrate-binding site is contributed by 317 to 319 (ESQ). The ATP site is built by Asp500 and Gly537. Residue Asn538 participates in Mg(2+) binding. Ser540 provides a ligand contact to substrate.

This sequence belongs to the FGAMS family. Monomer. Part of the FGAM synthase complex composed of 1 PurL, 1 PurQ and 2 PurS subunits.

The protein resides in the cytoplasm. It catalyses the reaction N(2)-formyl-N(1)-(5-phospho-beta-D-ribosyl)glycinamide + L-glutamine + ATP + H2O = 2-formamido-N(1)-(5-O-phospho-beta-D-ribosyl)acetamidine + L-glutamate + ADP + phosphate + H(+). It functions in the pathway purine metabolism; IMP biosynthesis via de novo pathway; 5-amino-1-(5-phospho-D-ribosyl)imidazole from N(2)-formyl-N(1)-(5-phospho-D-ribosyl)glycinamide: step 1/2. Part of the phosphoribosylformylglycinamidine synthase complex involved in the purines biosynthetic pathway. Catalyzes the ATP-dependent conversion of formylglycinamide ribonucleotide (FGAR) and glutamine to yield formylglycinamidine ribonucleotide (FGAM) and glutamate. The FGAM synthase complex is composed of three subunits. PurQ produces an ammonia molecule by converting glutamine to glutamate. PurL transfers the ammonia molecule to FGAR to form FGAM in an ATP-dependent manner. PurS interacts with PurQ and PurL and is thought to assist in the transfer of the ammonia molecule from PurQ to PurL. This is Phosphoribosylformylglycinamidine synthase subunit PurL from Bacillus pumilus (strain SAFR-032).